The primary structure comprises 95 residues: Integration host factor subunit beta (95 aa).

The interval 57–76 is disordered; that stretch reads APRTGRNPKTGDKVDLEGKY. The span at 65-76 shows a compositional bias: basic and acidic residues; the sequence is KTGDKVDLEGKY.

The protein belongs to the bacterial histone-like protein family. Heterodimer of an alpha and a beta chain.

Functionally, this protein is one of the two subunits of integration host factor, a specific DNA-binding protein that functions in genetic recombination as well as in transcriptional and translational control. The protein is Integration host factor subunit beta of Enterobacter sp. (strain 638).